We begin with the raw amino-acid sequence, 138 residues long: Transcription antitermination protein NusB (138 aa).

It belongs to the NusB family.

In terms of biological role, involved in transcription antitermination. Required for transcription of ribosomal RNA (rRNA) genes. Binds specifically to the boxA antiterminator sequence of the ribosomal RNA (rrn) operons. In Helicobacter pylori (strain Shi470), this protein is Transcription antitermination protein NusB.